Reading from the N-terminus, the 258-residue chain is Phosphate import ATP-binding protein PstB (258 aa).

Residues 12-253 (IEVKNLNFYY…PARKETEDYI (242 aa)) enclose the ABC transporter domain. Residue 44–51 (GPSGCGKS) coordinates ATP.

It belongs to the ABC transporter superfamily. Phosphate importer (TC 3.A.1.7) family. The complex is composed of two ATP-binding proteins (PstB), two transmembrane proteins (PstC and PstA) and a solute-binding protein (PstS).

It localises to the cell inner membrane. It carries out the reaction phosphate(out) + ATP + H2O = ADP + 2 phosphate(in) + H(+). Part of the ABC transporter complex PstSACB involved in phosphate import. Responsible for energy coupling to the transport system. This Bordetella avium (strain 197N) protein is Phosphate import ATP-binding protein PstB.